Consider the following 243-residue polypeptide: tRNA (guanine-N(1)-)-methyltransferase (243 aa).

Residues Gly-113 and 133 to 138 contribute to the S-adenosyl-L-methionine site; that span reads IGDFVL.

Belongs to the RNA methyltransferase TrmD family. Homodimer.

Its subcellular location is the cytoplasm. The enzyme catalyses guanosine(37) in tRNA + S-adenosyl-L-methionine = N(1)-methylguanosine(37) in tRNA + S-adenosyl-L-homocysteine + H(+). In terms of biological role, specifically methylates guanosine-37 in various tRNAs. The chain is tRNA (guanine-N(1)-)-methyltransferase from Bacillus licheniformis (strain ATCC 14580 / DSM 13 / JCM 2505 / CCUG 7422 / NBRC 12200 / NCIMB 9375 / NCTC 10341 / NRRL NRS-1264 / Gibson 46).